Reading from the N-terminus, the 69-residue chain is uncharacterized protein (69 aa).

4Fe-4S ferredoxin-type domains are found at residues 2–30 (KIEI…KSKK) and 38–67 (PPIP…IELS). [4Fe-4S] cluster is bound by residues C10, C13, C16, C20, C47, C50, C53, and C57.

[4Fe-4S] cluster serves as cofactor.

This is an uncharacterized protein from Methanocaldococcus jannaschii (strain ATCC 43067 / DSM 2661 / JAL-1 / JCM 10045 / NBRC 100440) (Methanococcus jannaschii).